We begin with the raw amino-acid sequence, 322 residues long: tRNA-specific adenosine deaminase subunit TAD3 (322 aa).

A CMP/dCMP-type deaminase domain is found at 162–283 (EVRNELSRAS…EMQRTGSLKL (122 aa)). 4 residues coordinate Zn(2+): H216, C254, C257, and C322.

The protein belongs to the cytidine and deoxycytidylate deaminase family. ADAT3 subfamily. Heterodimer with TAD2.

It localises to the cytoplasm. The protein resides in the nucleus. It is found in the peroxisome. Functionally, structural subunit of tRNA-specific adenosine deaminase, which deaminates adenosine-34 (the first, also called wobble position of the anticodon) to inosine in many tRNAs. Inosine-34 allows the decoding of 3 different nucleotides at the third position of mRNA codons, as inosine is able to pair with U, C, and A. The protein is tRNA-specific adenosine deaminase subunit TAD3 (TAD3) of Saccharomyces cerevisiae (strain ATCC 204508 / S288c) (Baker's yeast).